The chain runs to 254 residues: CDP-diacylglycerol pyrophosphatase (254 aa).

Residues 6–26 (YFLLALLVAILAALAGGYYWL) traverse the membrane as a helical segment.

The protein belongs to the Cdh family.

It is found in the cell inner membrane. The catalysed reaction is a CDP-1,2-diacyl-sn-glycerol + H2O = a 1,2-diacyl-sn-glycero-3-phosphate + CMP + 2 H(+). The protein operates within phospholipid metabolism; CDP-diacylglycerol degradation; phosphatidate from CDP-diacylglycerol: step 1/1. This chain is CDP-diacylglycerol pyrophosphatase, found in Klebsiella pneumoniae (strain 342).